We begin with the raw amino-acid sequence, 239 residues long: tRNA (guanine-N(1)-)-methyltransferase (239 aa).

Residues Gly-109 and 133-138 (IGDYVL) contribute to the S-adenosyl-L-methionine site. Disordered stretches follow at residues 163 to 187 (PASRHDDSHSPALDRRLEGPSYTRP) and 217 to 239 (QRTRERRPELLADPVGPQDDPGR). Basic and acidic residues-rich tracts occupy residues 165 to 180 (SRHDDSHSPALDRRLE) and 217 to 226 (QRTRERRPEL).

Belongs to the RNA methyltransferase TrmD family. In terms of assembly, homodimer.

It localises to the cytoplasm. The enzyme catalyses guanosine(37) in tRNA + S-adenosyl-L-methionine = N(1)-methylguanosine(37) in tRNA + S-adenosyl-L-homocysteine + H(+). Specifically methylates guanosine-37 in various tRNAs. The protein is tRNA (guanine-N(1)-)-methyltransferase of Mycolicibacterium paratuberculosis (strain ATCC BAA-968 / K-10) (Mycobacterium paratuberculosis).